A 127-amino-acid chain; its full sequence is Holo-[acyl-carrier-protein] synthase (127 aa).

Mg(2+) is bound by residues Asp8 and Glu57.

The protein belongs to the P-Pant transferase superfamily. AcpS family. Requires Mg(2+) as cofactor.

It localises to the cytoplasm. The catalysed reaction is apo-[ACP] + CoA = holo-[ACP] + adenosine 3',5'-bisphosphate + H(+). Functionally, transfers the 4'-phosphopantetheine moiety from coenzyme A to a Ser of acyl-carrier-protein. In Ruthia magnifica subsp. Calyptogena magnifica, this protein is Holo-[acyl-carrier-protein] synthase.